Here is a 220-residue protein sequence, read N- to C-terminus: Iron-sulfur cluster repair protein YtfE (220 aa).

This sequence belongs to the RIC family. YtfE subfamily. In terms of assembly, homodimer.

The protein resides in the cytoplasm. In terms of biological role, di-iron-containing protein involved in the repair of iron-sulfur clusters damaged by oxidative and nitrosative stress conditions. This is Iron-sulfur cluster repair protein YtfE from Salmonella schwarzengrund (strain CVM19633).